Here is a 237-residue protein sequence, read N- to C-terminus: Cysteine-rich venom protein ENH2 (237 aa).

The first 18 residues, 1–18 (MIVFILLSLAAVLQQFVA), serve as a signal peptide directing secretion. The SCP domain occupies 37-165 (VDMHNSFRRS…PYNYFYVCQY (129 aa)). 7 disulfides stabilise this stretch: cysteine 74–cysteine 152, cysteine 91–cysteine 166, cysteine 147–cysteine 163, cysteine 185–cysteine 192, cysteine 188–cysteine 197, cysteine 210–cysteine 228, and cysteine 219–cysteine 232. Residues 201 to 237 (CPITNTFTNCDSLLQQNSCEDSYIKTNCGASCFGQDK) enclose the ShKT domain.

The protein belongs to the CRISP family. Expressed by the venom gland.

The protein resides in the secreted. Functionally, blocks contraction of smooth muscle elicited by high potassium-induced depolarization, but does not block caffeine-stimulated contraction. May target voltage-gated calcium channels on smooth muscle. In Pseudoferania polylepis (Macleay's water snake), this protein is Cysteine-rich venom protein ENH2.